The sequence spans 420 residues: Acetyl-CoA acetyltransferase, mitochondrial (420 aa).

A mitochondrion-targeting transit peptide spans 1–26 (MTSRALYSTRSQLCRHLAHKYLSRSY). The active-site Acyl-thioester intermediate is Cys-119. CoA is bound by residues Tyr-212, 251–253 (KVD), and Lys-256. K(+) is bound at residue Tyr-212. 3 residues coordinate K(+): Ala-273, Ala-274, and Ala-276. Ser-277 serves as a coordination point for CoA. Val-374 serves as a coordination point for K(+). Cys-406 serves as the catalytic Proton donor/acceptor.

This sequence belongs to the thiolase-like superfamily. Thiolase family. In terms of assembly, homotetramer.

It is found in the mitochondrion. It catalyses the reaction 2 acetyl-CoA = acetoacetyl-CoA + CoA. It carries out the reaction propanoyl-CoA + acetyl-CoA = 2-methyl-3-oxobutanoyl-CoA + CoA. It functions in the pathway lipid metabolism; fatty acid beta-oxidation. This is one of the enzymes that catalyzes the last step of the mitochondrial beta-oxidation pathway, an aerobic process breaking down fatty acids into acetyl-CoA. Using free coenzyme A/CoA, catalyzes the thiolytic cleavage of medium- to long-chain 3-oxoacyl-CoAs into acetyl-CoA and a fatty acyl-CoA shortened by two carbon atoms. The activity of the enzyme is reversible and it can also catalyze the condensation of two acetyl-CoA molecules into acetoacetyl-CoA. Thereby, it plays a major role in ketone body metabolism. This chain is Acetyl-CoA acetyltransferase, mitochondrial (acat1), found in Danio rerio (Zebrafish).